The following is a 500-amino-acid chain: NAD(P)H-quinone oxidoreductase subunit 2 B, chloroplastic (500 aa).

Helical transmembrane passes span 14-34 (SILP…IDLT), 41-61 (WLYF…LFQL), 78-98 (FNGI…PLSM), 116-136 (LTAT…IIFI), 166-186 (LLMG…LYGL), 211-231 (ISIV…LVPF), 242-262 (APTS…LALA), 277-297 (WHLI…FIAI), 305-325 (MLAY…IAGD), 335-355 (YMLF…LFGL), 376-396 (ASFL…AGFF), 409-429 (GLYL…YYYL), and 467-487 (IIIC…VIAI).

The protein belongs to the complex I subunit 2 family. In terms of assembly, NDH is composed of at least 16 different subunits, 5 of which are encoded in the nucleus.

It localises to the plastid. It is found in the chloroplast thylakoid membrane. The enzyme catalyses a plastoquinone + NADH + (n+1) H(+)(in) = a plastoquinol + NAD(+) + n H(+)(out). It catalyses the reaction a plastoquinone + NADPH + (n+1) H(+)(in) = a plastoquinol + NADP(+) + n H(+)(out). Its function is as follows. NDH shuttles electrons from NAD(P)H:plastoquinone, via FMN and iron-sulfur (Fe-S) centers, to quinones in the photosynthetic chain and possibly in a chloroplast respiratory chain. The immediate electron acceptor for the enzyme in this species is believed to be plastoquinone. Couples the redox reaction to proton translocation, and thus conserves the redox energy in a proton gradient. In Anthoceros angustus (Hornwort), this protein is NAD(P)H-quinone oxidoreductase subunit 2 B, chloroplastic.